Here is a 143-residue protein sequence, read N- to C-terminus: Flagellar assembly factor FliW (143 aa).

The protein belongs to the FliW family. As to quaternary structure, interacts with translational regulator CsrA and flagellin(s).

Its subcellular location is the cytoplasm. In terms of biological role, acts as an anti-CsrA protein, binds CsrA and prevents it from repressing translation of its target genes, one of which is flagellin. Binds to flagellin and participates in the assembly of the flagellum. This chain is Flagellar assembly factor FliW, found in Clostridium botulinum (strain 657 / Type Ba4).